Here is a 161-residue protein sequence, read N- to C-terminus: Early E3 17.7 kDa glycoprotein (161 aa).

Residues Asn14 and Asn87 are each glycosylated (N-linked (GlcNAc...) asparagine; by host). A helical transmembrane segment spans residues 102–129 (IINPAIFLFLHVLTLVIVLAMAAEVIYN).

Its subcellular location is the host membrane. The protein is Early E3 17.7 kDa glycoprotein of Murine adenovirus A serotype 1 (MAdV-1).